The following is a 343-amino-acid chain: Annexin A1 isoform p37 (343 aa).

Residue Gln19 forms an Isoglutamyl lysine isopeptide (Gln-Lys) (interchain with K-?) linkage. Tyr21 carries the phosphotyrosine; by EGFR; in vitro modification. Residue Ser24 is modified to Phosphoserine; by PKC; in vitro. Annexin repeat units follow at residues 38–109, 110–181, 193–265, and 269–340; these read FDPS…ALLK, TPAQ…VLAK, DLAD…ALVK, and SKPA…ALCG.

The protein belongs to the annexin family. Post-translationally, phosphorylated by protein kinase C and epidermal growth factor receptor/kinase. The N-terminus is blocked.

The protein localises to the nucleus. Its subcellular location is the cytoplasm. It localises to the cell projection. The protein resides in the cilium. It is found in the basolateral cell membrane. Its function is as follows. Calcium/phospholipid-binding protein which promotes membrane fusion and is involved in exocytosis. This protein regulates phospholipase A2 activity. It seems to bind from two to four calcium ions with high affinity. The chain is Annexin A1 isoform p37 (CP37) from Columba livia (Rock dove).